The primary structure comprises 327 residues: Malate dehydrogenase (327 aa).

Position 12–18 (12–18 (GAAGQIG)) interacts with NAD(+). Substrate contacts are provided by R93 and R99. NAD(+) contacts are provided by residues N106, Q113, and 130–132 (VGN). Substrate is bound by residues N132 and R163. H188 acts as the Proton acceptor in catalysis.

It belongs to the LDH/MDH superfamily. MDH type 2 family.

It catalyses the reaction (S)-malate + NAD(+) = oxaloacetate + NADH + H(+). In terms of biological role, catalyzes the reversible oxidation of malate to oxaloacetate. The sequence is that of Malate dehydrogenase from Cupriavidus necator (strain ATCC 17699 / DSM 428 / KCTC 22496 / NCIMB 10442 / H16 / Stanier 337) (Ralstonia eutropha).